Reading from the N-terminus, the 1430-residue chain is MVPNEKSFPRGGTIHSEVKTDDVSLNIVFGASQKKVKKAPKVKENLLSYETEEQNGQLEAFSAETLNMDTLQEDMLVMGVVKELTATALQIALPGRMFARTLVADISDAYTRVAKAAMSGDTSEYHDLTELFQLGRIVYGKAIKTEKLDTGRVSLLLSLKPADVHGNLHHKSIKKGFIFSGAVAEALEHGYVIESGVQGLQAFVPCEKPAQKLHVGQLAFLKVKTVHHDTHQSTCTCVQVEQDQLRIKSQNETNLDYILPGSIVKFKVAKHLKDGLKGSIMNESFSAYVNEHHLANALDTLDAYELNEDYNARVLYVMPLTKLVYLTLNLDIKTGAAVAKDQDEEEQEVEPIKVGSVVEKAKVLRLGSGGVVLLLNKKLKGIISYGSIRGNFKGNYDKDEVLSKYGRKTKHKVRILGYDVIESLYYCSDDPNVVNEKLFCLEDINAGDLVTAKIFKKDDKIKGWSVRIGKVNGILEQFYLAPNVRYDVGQSLKCRVLEVNAERKICYVSNRAEYLGKGIKILTDYASAHVGNVYMGTVVRCEDTYVLVKFGNGIKGVLHRQNLKENSSFFEGQTTKFRILTRNKDQITLTLPEDKFQLGEICPVEITNALDAGLEVKITFAAEDDEEDEDGNPKLEEFVGLIPLRLLSDHLELLHAQMRVHPAGSYTDAACIMQNIFSLRDVPYFSGQLTKDWQSVQVGDIIRSYVKHATDQVVDLMVCVRNYNKPVKVHVKMLRLNAVKNAPVELVPEQLLWVKVLSKEVETKTLTVSAKLTDVWSGDLSDTAKLVEGYLNEVAQIKAGLEEASAPISKYSVGEKINVVFKGIDATTNDWVYTVEGNGKVSALLLSSLVGTAKAPEMGSKHEAVILWIEYSSDVLLISNKKLDIAHISPSGELSTNLIGKAGMKAKVLLKLESVAVCSLKKGTNPLVICPIRLHPNDIENSGSAELRQGDFCNIAFIHDKLHIAVPETVWRLWRGVKRTAGTEVAPVKAKKAKVEESPKQKKTTIEETSAQKKVKAKAKVETKTEAKAIPTKRKAEVVEKITNGQKKTQPLTNGIVKEKPKQNGKLFFEDKTPAKNAKSETPKSNGAEGKSRLPGVSSFWEDDVNQSKEGSSDEDEELNVAETQKNAAKKKRLSAKEKAKAEIKEEQRLREIEERNADPKARLETIDQYERLVIAQPNNSISWLKYIAFLLSNTEIEKARALARRAISTISFRETQELRNMWSALLNMELVYSNNFDDVLKEALNCNDPLEIYISVVDILKKNKRKDRLSSVLTTVLNKFKTELRVWPVAAEAYFWLGKSDQVHNLLQRALRALPNQEHIPCIVSFAKLYAKHDNNDMAQTLLDDVVTSYPKRIDIWSVYVDMLIKAGLIDSARNVLERAVVQKLKPNKMQVIYKKYLQLEENHGTDATVAKVKQQAEQWVKNYAKTVK.

S1 motif domains lie at 74 to 160, 176 to 238, 261 to 329, 447 to 511, 531 to 592, and 697 to 771; these read DMLV…LSLK, GFIF…CTCV, GSIV…LTLN, GDLV…VSNR, GNVY…LTLP, and QVGD…VSAK. Residues 1041-1145 are disordered; it reads KITNGQKKTQ…AKEKAKAEIK (105 aa). Residues 1043–1053 are compositionally biased toward polar residues; the sequence is TNGQKKTQPLT. Composition is skewed to basic and acidic residues over residues 1057–1082 and 1135–1145; these read VKEK…KSET and SAKEKAKAEIK. Residues 1119–1157 are a coiled coil; that stretch reads LNVAETQKNAAKKKRLSAKEKAKAEIKEEQRLREIEERN. HAT repeat units lie at residues 1161 to 1193, 1195 to 1232, 1265 to 1297, 1299 to 1333, 1335 to 1367, and 1369 to 1404; these read KARL…FLLS, TEIE…MELV, KRKD…AYFW, GKSD…LYAK, DNND…MLIK, and GLID…LEEN.

It is found in the nucleus. The protein localises to the nucleolus. Involved in rRNA processing or maturation during ribosome biogenesis. The chain is rRNA biogenesis protein RRP5 from Drosophila melanogaster (Fruit fly).